We begin with the raw amino-acid sequence, 755 residues long: MSSRDASLTPLKAVVIDDPPLRQTPEPFDEQSAYNPQSPIAIDFGSSKLRAGFVNHATPTHIFPNALTKFRDRKLNKNFTFVGNDTLLDQAVRSQSRSPFDGPFVTNWNLTEEILDYTFHHLGVVPDNGIPNPILLTERLATVQSQRTNWYQILFETYNVPGVTFGIDSLFSFYNYNPSGNKTGLVISCGHEDTNVIPVVDGAGILTDAKRINWGGHQAVDYLNDLMALKYPYFPTKMSYLQYETMYKDYCYVSRNYDEDIEKILTLENLDTNDVVVEAPFTEVLQPQKTEEELRIQAEKRKETGKRLQEQARLKRMEKLVQKQEEFEYFSKVRDQLIDEPKKKVLSVLQNAGFDDERDFKKYLHSLEQSLKKAQMVEAEDDSHLDEMNEDKTAQKFDLLDIADEDLNEDQIKEKRKQRFLKASQDARQKAKEEKERVAKEEEEKKLKEQQWRETDLNGWIKDKRLKLNKLIKRRKEKLKLRDEMKDRKSQVSQNRMKNLASLAEDNVKQGAKRNRHQATIDNDPNDTFGANDEDWLIYTDITQNPEAFEEALEYEYKDIVELERLLLEHDPNFTEEDTLEAQYDWRNSILHLFLRGPRPHDSENIHEQHQMHLNVERIRVPEVIFQPTMGGQDQAGICELSETILLKKFGSQPGKLSQTSIDMVNNVLITGGNAKVPGLKERIVKEFTGFLPTGTNITVNMSSDPSLDAWKGMAALARNEEQYRKTVISKKEYEEYGPEYIKEHKLGNTKYFED.

At S7 the chain carries Phosphoserine. K12 participates in a covalent cross-link: Glycyl lysine isopeptide (Lys-Gly) (interchain with G-Cter in ubiquitin). T24 is modified (phosphothreonine). S383 is subject to Phosphoserine. The interval 418 to 444 is disordered; sequence QRFLKASQDARQKAKEEKERVAKEEEE. Positions 425–444 are enriched in basic and acidic residues; it reads QDARQKAKEEKERVAKEEEE.

This sequence belongs to the actin family. Component of the chromatin-remodeling INO80 complex, at least composed of ARP4, ARP5, ARP8, RVB1, RVB2, TAF14, NHP10, IES1, IES3, IES4, IES6, ACT1, IES2, IES5 and INO80.

It is found in the nucleus. Its function is as follows. Probably involved in transcription regulation via its interaction with the INO80 complex, a chromatin remodeling complex. This Saccharomyces cerevisiae (strain ATCC 204508 / S288c) (Baker's yeast) protein is Actin-related protein 5 (ARP5).